The sequence spans 539 residues: MRVNNLTPQDLKAYGINDVQDIVYNPSYDTLYQEELNPGLEGYERGVLTNLGAVAVDTGIFTGRSPKDKYIVRDDTTRDTLWWSDKGKGKNDNKPLSQETWQHLKGLVTHQLSGKRLFIVDAFCGANADTRLSVRFITEVAWQAHFVKNMFIRPTDEELVGFKPDFIVMNGAKCTNPQWKEQGLNSENFVAFNLTERIQLIGGTWYGGEMKKGMFSVMNYLLPLKGIASMHCSANVGEKGDVAVFFGLSGTGKTTLSTDPKRRLIGDDEHGWDDDGVFNFEGGCYAKTIKLSKEAEPEIYHAIRRDALLENVTVREDGTVDFDDGSKTENTRVSYPIYHIDNIVKPVSKAGHATKVIFLTADAFGVLPPVSRLTANQTQYHFLSGFTAKLAGTERGVTEPTPTFSACFGAAFLTLHPTQYAEVLVKRMQAAGAQAYLVNTGWNGTGKRISIKDTRAIIDAILNGSLDNAETFRLPLFDLAIPTELPGVDTHILDPRNTYASPEQWQEKATALAKLFIENFEKYTDTPAGEALVSAGPKL.

Positions 64, 206, and 212 each coordinate substrate. ATP contacts are provided by residues Lys212, His231, and 247 to 255 (GLSGTGKTT). Lys212 and His231 together coordinate Mn(2+). Residue Asp268 participates in Mn(2+) binding. Residues Glu296, Arg332, 448–449 (RI), and Thr454 contribute to the ATP site. Arg332 contacts substrate.

The protein belongs to the phosphoenolpyruvate carboxykinase (ATP) family. As to quaternary structure, monomer. Mn(2+) serves as cofactor.

The protein resides in the cytoplasm. It catalyses the reaction oxaloacetate + ATP = phosphoenolpyruvate + ADP + CO2. It participates in carbohydrate biosynthesis; gluconeogenesis. Functionally, involved in the gluconeogenesis. Catalyzes the conversion of oxaloacetate (OAA) to phosphoenolpyruvate (PEP) through direct phosphoryl transfer between the nucleoside triphosphate and OAA. The sequence is that of Phosphoenolpyruvate carboxykinase (ATP) from Salmonella agona (strain SL483).